The primary structure comprises 1147 residues: Putative ATP-dependent RNA helicase L377 (1147 aa).

Residues isoleucine 108–lysine 315 form the Helicase ATP-binding domain. Tryptophan 121 to serine 128 is an ATP binding site. The short motif at aspartate 264–histidine 267 is the DEAH box element.

Belongs to the DEAD box helicase family. DEAH subfamily.

The protein resides in the virion. It catalyses the reaction ATP + H2O = ADP + phosphate + H(+). The polypeptide is Putative ATP-dependent RNA helicase L377 (Acanthamoeba polyphaga (Amoeba)).